Reading from the N-terminus, the 231-residue chain is Ion-translocating oxidoreductase complex subunit E (231 aa).

A run of 6 helical transmembrane segments spans residues 18-38 (ALVQ…ATNA), 39-59 (LGLG…ISTL), 63-83 (TPAE…VSAV), 86-106 (LINA…PLIV), 125-145 (ALSA…MFVL), and 182-202 (PFLL…MLAG).

It belongs to the NqrDE/RnfAE family. As to quaternary structure, the complex is composed of six subunits: RsxA, RsxB, RsxC, RsxD, RsxE and RsxG.

Its subcellular location is the cell inner membrane. In terms of biological role, part of a membrane-bound complex that couples electron transfer with translocation of ions across the membrane. Required to maintain the reduced state of SoxR. The chain is Ion-translocating oxidoreductase complex subunit E from Escherichia coli O1:K1 / APEC.